A 442-amino-acid polypeptide reads, in one-letter code: Protein PhoH2 (442 aa).

The 133-residue stretch at 3–135 folds into the PINc domain; that stretch reads KIYVLDTNVL…LVSKDVLVRV (133 aa). 259-266 lines the ATP pocket; the sequence is GKAGTGKT.

It in the N-terminal section; belongs to the PINc/VapC protein family. In the C-terminal section; belongs to the PhoH family.

The catalysed reaction is n ATP + n H2O + wound RNA = n ADP + n phosphate + unwound RNA.. It carries out the reaction ATP + H2O = ADP + phosphate + H(+). It catalyses the reaction GTP + H2O = GDP + phosphate + H(+). In terms of biological role, unwinds and/or cleaves 5'-tailed RNA in vitro. Has ATPase and GTPase activities. Unlike the protein in mycobacteria there does not seem to be an antitoxin gene upstream, suggesting this is not a toxin-antitoxin system. This is Protein PhoH2 from Bacillus subtilis (strain 168).